Reading from the N-terminus, the 441-residue chain is Glutamate-1-semialdehyde 2,1-aminomutase (441 aa).

Lys273 carries the post-translational modification N6-(pyridoxal phosphate)lysine.

It belongs to the class-III pyridoxal-phosphate-dependent aminotransferase family. HemL subfamily. The cofactor is pyridoxal 5'-phosphate.

Its subcellular location is the cytoplasm. The catalysed reaction is (S)-4-amino-5-oxopentanoate = 5-aminolevulinate. Its pathway is porphyrin-containing compound metabolism; protoporphyrin-IX biosynthesis; 5-aminolevulinate from L-glutamyl-tRNA(Glu): step 2/2. The chain is Glutamate-1-semialdehyde 2,1-aminomutase from Pyrobaculum calidifontis (strain DSM 21063 / JCM 11548 / VA1).